The chain runs to 654 residues: Tetratricopeptide repeat protein 30 homolog (654 aa).

TPR repeat units lie at residues 10–43 (DGEYTKTIYTMIKEERFQDAINTLNTIPESSTTR), 44–76 (AGLSLLGHCYYQTQDFIEAANCYEHLLNLVPDV), 145–178 (ASTKNDEGCLLYQANMYEDALQRYVSALQAGGFN), 180–212 (HVAYNAALCHYRRKENSQALNYIAEIVERGIRN), 393–426 (CRSATDQNALRMALREYEGALESYLPVAMARAWI), 452–485 (SWRLHAAHVLFMRGDRYKEAAAFYEPIVRQNYDD), and 535–568 (CIVNLVIGTLYCAKNNYEFGLSRIAHALDGGSGA).

It belongs to the TTC30/dfy-1/fleer family.

The protein resides in the cell projection. It is found in the cilium. Functionally, required for polyglutamylation of axonemal tubulin in sensory cilia. Plays a role in anterograde intraflagellar transport (IFT), the process by which cilia precursors are transported from the base of the cilium to the site of their incorporation at the tip. This chain is Tetratricopeptide repeat protein 30 homolog, found in Anopheles gambiae (African malaria mosquito).